The primary structure comprises 188 residues: Elongation factor P (188 aa).

Lysine 34 is modified (N6-(3,6-diaminohexanoyl)-5-hydroxylysine).

Belongs to the elongation factor P family. Post-translationally, may be beta-lysylated on the epsilon-amino group of Lys-34 by the combined action of EpmA and EpmB, and then hydroxylated on the C5 position of the same residue by EpmC (if this protein is present). Lysylation is critical for the stimulatory effect of EF-P on peptide-bond formation. The lysylation moiety may extend toward the peptidyltransferase center and stabilize the terminal 3-CCA end of the tRNA. Hydroxylation of the C5 position on Lys-34 may allow additional potential stabilizing hydrogen-bond interactions with the P-tRNA.

The protein localises to the cytoplasm. The protein operates within protein biosynthesis; polypeptide chain elongation. Functionally, involved in peptide bond synthesis. Alleviates ribosome stalling that occurs when 3 or more consecutive Pro residues or the sequence PPG is present in a protein, possibly by augmenting the peptidyl transferase activity of the ribosome. Modification of Lys-34 is required for alleviation. In Serratia proteamaculans (strain 568), this protein is Elongation factor P.